The primary structure comprises 123 residues: WAP four-disulfide core domain protein 2 (123 aa).

Residues 1–26 (MPACRLGLLVASLLLGLLLGLPPVTG) form the signal peptide. WAP domains are found at residues 28–69 (GAEK…VTIC) and 72–122 (PNEK…VTPV). 8 disulfides stabilise this stretch: cysteine 35-cysteine 61, cysteine 44-cysteine 65, cysteine 48-cysteine 60, cysteine 54-cysteine 69, cysteine 79-cysteine 109, cysteine 92-cysteine 113, cysteine 96-cysteine 108, and cysteine 102-cysteine 118.

In terms of assembly, homotrimer; disulfide-linked. In terms of tissue distribution, detected in the distal parts of the epididymis.

The protein localises to the secreted. In terms of biological role, broad range protease inhibitor. This is WAP four-disulfide core domain protein 2 (WFDC2) from Sus scrofa (Pig).